Reading from the N-terminus, the 418-residue chain is Gamma-glutamyl phosphate reductase (418 aa).

Belongs to the gamma-glutamyl phosphate reductase family.

Its subcellular location is the cytoplasm. It carries out the reaction L-glutamate 5-semialdehyde + phosphate + NADP(+) = L-glutamyl 5-phosphate + NADPH + H(+). Its pathway is amino-acid biosynthesis; L-proline biosynthesis; L-glutamate 5-semialdehyde from L-glutamate: step 2/2. Its function is as follows. Catalyzes the NADPH-dependent reduction of L-glutamate 5-phosphate into L-glutamate 5-semialdehyde and phosphate. The product spontaneously undergoes cyclization to form 1-pyrroline-5-carboxylate. This chain is Gamma-glutamyl phosphate reductase, found in Trichlorobacter lovleyi (strain ATCC BAA-1151 / DSM 17278 / SZ) (Geobacter lovleyi).